A 343-amino-acid chain; its full sequence is CCN family member 3 (343 aa).

A signal peptide spans 1–18 (MTPHLALCFILLIQQVAS). The 72-residue stretch at 19–90 (QKCPSQCDQC…RMETGTCMAL (72 aa)) folds into the IGFBP N-terminal domain. Disulfide bonds link C21–C46, C25–C48, C28–C49, C35–C52, C60–C74, and C66–C87. A VWFC domain is found at 93–159 (NSCVFDGVVY…GECCEKWVCD (67 aa)). Residues 190–235 (ACIAQTTEWSACSKTCGMGVSSRVTNRNARCEMQKQIRLCMVRSCE) form the TSP type-1 domain. Disulfide bonds link C249–C286, C266–C300, C277–C316, C280–C318, and C285–C322. One can recognise a CTCK domain in the interval 249–323 (CVRVRKTTKP…STCVCHYNCP (75 aa)). N265 carries an N-linked (GlcNAc...) asparagine glycan.

It belongs to the CCN family.

The protein resides in the secreted. It localises to the cytoplasm. The protein localises to the cell junction. It is found in the gap junction. Its function is as follows. Immediate-early protein playing a role in various cellular processes including proliferation, adhesion, migration, differentiation and survival. Acts by binding to integrins or membrane receptors such as NOTCH1. The protein is CCN family member 3 (ccn3) of Xenopus laevis (African clawed frog).